The chain runs to 428 residues: Tyrosine--tRNA ligase (428 aa).

Tyr41 contributes to the L-tyrosine binding site. The short motif at 46 to 55 (PTADSLHLGH) is the 'HIGH' region element. Residues Tyr179 and Gln183 each contribute to the L-tyrosine site. Positions 239–243 (KFGKT) match the 'KMSKS' region motif. ATP is bound at residue Lys242. Positions 361 to 418 (TDLMQALVDAELQPSRGQARKTIASNAVTINGEKQSDPEYIFNDEDRLFGRYTLLRRG) constitute an S4 RNA-binding domain.

It belongs to the class-I aminoacyl-tRNA synthetase family. TyrS type 1 subfamily. In terms of assembly, homodimer.

The protein localises to the cytoplasm. It catalyses the reaction tRNA(Tyr) + L-tyrosine + ATP = L-tyrosyl-tRNA(Tyr) + AMP + diphosphate + H(+). Its function is as follows. Catalyzes the attachment of tyrosine to tRNA(Tyr) in a two-step reaction: tyrosine is first activated by ATP to form Tyr-AMP and then transferred to the acceptor end of tRNA(Tyr). This Salmonella arizonae (strain ATCC BAA-731 / CDC346-86 / RSK2980) protein is Tyrosine--tRNA ligase.